Here is a 108-residue protein sequence, read N- to C-terminus: UPF0060 membrane protein KPN78578_15550 (108 aa).

4 helical membrane-spanning segments follow: residues 6–26 (LLFF…WLWL), 29–49 (GATP…VWLL), 61–81 (AAYG…VDGV), and 86–106 (YDWA…AGWG).

The protein belongs to the UPF0060 family.

It is found in the cell inner membrane. The sequence is that of UPF0060 membrane protein KPN78578_15550 from Klebsiella pneumoniae subsp. pneumoniae (strain ATCC 700721 / MGH 78578).